Consider the following 126-residue polypeptide: Glycine cleavage system H protein (126 aa).

One can recognise a Lipoyl-binding domain in the interval 21–103 (TVTVGISDHA…YESGWIARIK (83 aa)). Lys62 carries the post-translational modification N6-lipoyllysine.

Belongs to the GcvH family. As to quaternary structure, the glycine cleavage system is composed of four proteins: P, T, L and H. (R)-lipoate is required as a cofactor.

The glycine cleavage system catalyzes the degradation of glycine. The H protein shuttles the methylamine group of glycine from the P protein to the T protein. The sequence is that of Glycine cleavage system H protein from Aliivibrio fischeri (strain MJ11) (Vibrio fischeri).